We begin with the raw amino-acid sequence, 183 residues long: Hypoxanthine-guanine-xanthine phosphoribosyltransferase (183 aa).

Residues 102-110, K134, and D163 each bind GMP; that span reads EDIIDTGLT. D106 functions as the Proton acceptor in the catalytic mechanism. D163 provides a ligand contact to Mg(2+).

As to quaternary structure, homodimer. The cofactor is Mg(2+).

Its subcellular location is the cytoplasm. It catalyses the reaction IMP + diphosphate = hypoxanthine + 5-phospho-alpha-D-ribose 1-diphosphate. The enzyme catalyses GMP + diphosphate = guanine + 5-phospho-alpha-D-ribose 1-diphosphate. It carries out the reaction XMP + diphosphate = xanthine + 5-phospho-alpha-D-ribose 1-diphosphate. It functions in the pathway purine metabolism; GMP biosynthesis via salvage pathway; GMP from guanine: step 1/1. It participates in purine metabolism; IMP biosynthesis via salvage pathway; IMP from hypoxanthine: step 1/1. The protein operates within purine metabolism; XMP biosynthesis via salvage pathway; XMP from xanthine: step 1/1. In terms of biological role, essential in nucleic acid metabolism of T.foetus because the parasite is unable to synthesize purine nucleotides de novo and relies on the HGXPRTase activities for its purine requirements by salvaging purine bases from the host. Works with guanine, hypoxanthine and xanthine. The chain is Hypoxanthine-guanine-xanthine phosphoribosyltransferase (HPT) from Tritrichomonas foetus (Trichomonas foetus).